We begin with the raw amino-acid sequence, 751 residues long: Amyloid-beta precursor protein (751 aa).

The N-terminal stretch at 1-17 (MLPGLALLLLAAWTARA) is a signal peptide. Over 18–682 (LEVPTDGNAG…AEDVGSNKGA (665 aa)) the chain is Extracellular. The segment at 28–123 (LLAEPQIAMF…PYRCLVGEFV (96 aa)) is GFLD subdomain. Residues 28–189 (LLAEPQIAMF…RGVEFVCCPL (162 aa)) enclose the E1 domain. Cystine bridges form between Cys38-Cys62, Cys73-Cys117, Cys98-Cys105, Cys133-Cys187, Cys144-Cys174, and Cys158-Cys186. 96–110 (NWCKRDRKQCKTHPH) contributes to the heparin binding site. The cuBD subdomain stretch occupies residues 131-189 (DKCKFLHQERMDVCETHLHWHTVAKETCSEKSTNLHDYGMLLPCGIDKFRGVEFVCCPL). His147, His151, and Tyr168 together coordinate Cu(2+). The interval 181–188 (GVEFVCCP) is zinc-binding. Zn(2+) is bound by residues Glu183, Cys186, and Cys187. The disordered stretch occupies residues 195 to 284 (HVDSADAEED…TTTTTTESVE (90 aa)). Phosphoserine; by CK1 and CK2 is present on residues Ser198 and Ser206. Sulfotyrosine occurs at positions 217 and 262. The segment covering 228-264 (VAEEEEVAEVEEEEADDDEDDEDGDEVEEEAEEPYEE) has biased composition (acidic residues). Low complexity predominate over residues 268-281 (RTTSIATTTTTTTE). Disulfide bonds link Cys291/Cys341, Cys300/Cys324, and Cys316/Cys337. In terms of domain architecture, BPTI/Kunitz inhibitor spans 291-341 (CSEQAETGPCRAMISRWYFDVTEGKCAPFFYGGCGGNRNNFDTEEYCMAVC). Heparin-binding regions lie at residues 316-344 (CAPF…CGSV) and 363-428 (PGDE…QEAA). Tyr336 carries the sulfotyrosine modification. An OX-2 motif is present at residues 344–346 (VIP). The E2 domain maps to 355-546 (AVDKYLETPG…EEIQDEVDEL (192 aa)). The residue at position 422 (Ser422) is a Phosphoserine. Phosphotyrosine is present on Tyr478. The collagen-binding stretch occupies residues 504–521 (AAQIRSQVMTHLRVIYER). Asn523 and Asn552 each carry an N-linked (GlcNAc...) asparagine glycan. Cu(2+) is bound by residues His658, Tyr662, His665, and His666. Zn(2+)-binding residues include His658, Tyr662, His665, and His666. Residues 676-703 (VGSNKGAIIGLMVGGVVIATVIVITLVM) form an interaction with PSEN1 region. A helical transmembrane segment spans residues 683 to 703 (IIGLMVGGVVIATVIVITLVM). The Cytoplasmic segment spans residues 704–751 (LKKKQYTSIHHGVVEVDAAVTPEERHLSKMQQNGYENPTYKFFEQMQN). Residues 705–715 (KKKQYTSIHHG) carry the Basolateral sorting signal motif. The residue at position 710 (Thr710) is a Phosphothreonine. Ser711 carries the post-translational modification Phosphoserine; by APP-kinase I. Residues 713-732 (HHGVVEVDAAVTPEERHLSK) form an interaction with G(o)-alpha region. At Thr724 the chain carries Phosphothreonine; by CDK5 and MAPK10. The interval 737–751 (GYENPTYKFFEQMQN) is required for the interaction with KIF5B and for anterograde transport in axons. Tyr738 carries the phosphotyrosine; by ABL1 modification. The YENPXY motif; contains endocytosis signal signature appears at 738–743 (YENPTY). A Glycyl lysine isopeptide (Lys-Gly) (interchain with G-Cter in ubiquitin) cross-link involves residue Lys744.

It belongs to the APP family. As to quaternary structure, binds, via its C-terminus, to the PID domain of several cytoplasmic proteins, including APBB family members, the APBA family, MAPK8IP1, SHC1 and NUMB and DAB1. Binding to DAB1 inhibits its serine phosphorylation. Interacts (via NPXY motif) with DAB2 (via PID domain); the interaction is impaired by tyrosine phosphorylation of the NPXY motif. Also interacts with GPCR-like protein BPP, APPBP1, IB1, KNS2 (via its TPR domains), APPBP2 (via BaSS) and DDB1. In vitro, it binds MAPT via the MT-binding domains. Associates with microtubules in the presence of ATP and in a kinesin-dependent manner. Interacts, through a C-terminal domain, with GNAO1. Amyloid-beta protein 42 binds CHRNA7 in hippocampal neurons. Amyloid-beta associates with HADH2. Interacts with CPEB1, ANKS1B and AGER. Interacts with ITM2B. Interacts with ITM2C. Interacts with IDE. Can form homodimers; dimerization is enhanced in the presence of Cu(2+) ions. Can form homodimers; this is promoted by heparin binding. Amyloid-beta protein 40 interacts with S100A9. CTF-alpha product of APP interacts with GSAP. Isoform APP695 interacts with SORL1 (via N-terminal ectodomain); this interaction retains APP in the trans-Golgi network and reduces processing into soluble APP-alpha and amyloid-beta peptides. Isoform APP770 interacts with SORL1. The C99 fragment also interacts with SORL1. Interacts with PLD3. Interacts with VDAC1. Interacts with NSG1; could regulate APP processing. Amyloid-beta protein 42 interacts with FPR2. Interacts (via transmembrane region) with PSEN1; the interaction is direct. Interacts with LRRK2. Interacts (via cytoplasmic domain) with KIF5B. Interacts (via C-terminus) with APBB2/FE65L1 (via C-terminus). Interacts (via intracellular domain) with APBB3. In terms of processing, proteolytically processed under normal cellular conditions. Cleavage either by alpha-secretase, beta-secretase or theta-secretase leads to generation and extracellular release of soluble APP peptides, S-APP-alpha and S-APP-beta, and the retention of corresponding membrane-anchored C-terminal fragments, C80, C83 and C99. Subsequent processing of C80 and C83 by gamma-secretase yields P3 peptides. This is the major secretory pathway and is non-amyloidogenic. Alternatively, presenilin/nicastrin-mediated gamma-secretase processing of C99 releases the amyloid-beta proteins, amyloid-beta protein 40 and amyloid-beta protein 42, major components of amyloid plaques, and the cytotoxic C-terminal fragments, gamma-CTF(50), gamma-CTF(57) and gamma-CTF(59). PSEN1 cleavage is more efficient with C83 than with C99 as substrate (in vitro). Amyloid-beta protein 40 and Amyloid-beta protein 42 are cleaved by ACE. Many other minor amyloid-beta peptides, amyloid-beta 1-X peptides, are found in cerebral spinal fluid (CSF) including the amyloid-beta X-15 peptides, produced from the cleavage by alpha-secretase. Post-translationally, proteolytically cleaved by caspases during neuronal apoptosis. Cleavage at Asp-720 by either caspase-3, -8 or -9 results in the production of the neurotoxic C31 peptide and the increased production of amyloid-beta peptides. N- and O-glycosylated. In terms of processing, phosphorylation in the C-terminal on tyrosine, threonine and serine residues is neuron-specific. Phosphorylation can affect APP processing, neuronal differentiation and interaction with other proteins. Phosphorylated on Thr-724 in neuronal cells by Cdc5 kinase and Mapk10, in dividing cells by Cdc2 kinase in a cell-cycle dependent manner with maximal levels at the G2/M phase and, in vitro, by GSK-3-beta. The Thr-724 phosphorylated form causes a conformational change which reduces binding of Fe65 family members. In dopaminergic (DA) neurons, phosphorylation on Thr-724 by LRKK2 promotes the production and the nuclear translocation of the APP intracellular domain (AICD) which induces DA neuron apoptosis. Phosphorylation on Tyr-738 is required for SHC binding. Phosphorylated in the extracellular domain by casein kinases on both soluble and membrane-bound APP. This phosphorylation is inhibited by heparin. Post-translationally, trophic-factor deprivation triggers the cleavage of surface APP by beta-secretase to release sAPP-beta which is further cleaved to release an N-terminal fragment of APP (N-APP). Amyloid-beta peptides are degraded by IDE. In terms of processing, sulfated on tyrosine residues.

The protein resides in the cell membrane. Its subcellular location is the membrane. It localises to the perikaryon. It is found in the cell projection. The protein localises to the growth cone. The protein resides in the clathrin-coated pit. Its subcellular location is the early endosome. It localises to the cytoplasmic vesicle. It is found in the endoplasmic reticulum. The protein localises to the golgi apparatus. The protein resides in the secreted. Its subcellular location is the cell surface. It localises to the nucleus. It is found in the cytoplasm. In terms of biological role, functions as a cell surface receptor and performs physiological functions on the surface of neurons relevant to neurite growth, neuronal adhesion and axonogenesis. Interaction between APP molecules on neighboring cells promotes synaptogenesis. Involved in cell mobility and transcription regulation through protein-protein interactions. Can promote transcription activation through binding to APBB1-KAT5 and inhibit Notch signaling through interaction with Numb. Couples to apoptosis-inducing pathways such as those mediated by G(o) and JIP. Inhibits G(o)-alpha ATPase activity. Acts as a kinesin I membrane receptor, mediating the axonal transport of beta-secretase and presenilin 1. By acting as a kinesin I membrane receptor, plays a role in axonal anterograde transport of cargo towards synapses in axons. May be involved in copper homeostasis/oxidative stress through copper ion reduction. In vitro, copper-metallated APP induces neuronal death directly or is potentiated through Cu(2+)-mediated low-density lipoprotein oxidation. Can regulate neurite outgrowth through binding to components of the extracellular matrix such as heparin and collagen I and IV. Induces a AGER-dependent pathway that involves activation of p38 MAPK, resulting in internalization of amyloid-beta peptide and mitochondrial dysfunction in cultured cortical neurons. Provides Cu(2+) ions for GPC1 which are required for release of nitric oxide (NO) and subsequent degradation of the heparan sulfate chains on GPC1. Its function is as follows. Amyloid-beta peptides are lipophilic metal chelators with metal-reducing activity. Binds transient metals such as copper, zinc and iron. Functionally, the gamma-CTF peptides as well as the caspase-cleaved peptides, including C31, are potent enhancers of neuronal apoptosis. The sequence is that of Amyloid-beta precursor protein from Saimiri sciureus (Common squirrel monkey).